A 306-amino-acid chain; its full sequence is Lipid A biosynthesis palmitoleoyltransferase (306 aa).

Residues 20-40 (WFGLGVLWLWVQLPYPVLCFL) traverse the membrane as a helical segment. The short motif at 132–137 (HFMSLE) is the HXXXXD motif element.

It belongs to the LpxL/LpxM/LpxP family. LpxP subfamily.

The protein resides in the cell inner membrane. It carries out the reaction (9Z)-hexadecenoyl-[ACP] + alpha-Kdo-(2-&gt;4)-alpha-Kdo-(2-&gt;6)-lipid IVA (E. coli) = (9Z)-hexadecenoyl-(Kdo)2-lipid IVA (E. coli) + holo-[ACP]. The protein operates within bacterial outer membrane biogenesis; lipopolysaccharide biosynthesis. Catalyzes the transfer of palmitoleate from palmitoleoyl-[acyl-carrier-protein] (ACP) to Kdo(2)-lipid IV(A) to form Kdo(2)-(palmitoleoyl)-lipid IV(A). Required for the biosynthesis of a distinct molecular species of lipid A, which is present only in cells grown at low temperatures. It may confer a selective advantage to cells growing at lower temperatures by making the outer membrane a more effective barrier to harmful chemicals. This chain is Lipid A biosynthesis palmitoleoyltransferase, found in Escherichia coli (strain K12).